A 240-amino-acid polypeptide reads, in one-letter code: NAD(P)H-hydrate epimerase (240 aa).

The YjeF N-terminal domain occupies 15 to 224 (AQEIDAELMG…SYNLKLPCYP (210 aa)). 66 to 70 (NQGGD) is a binding site for (6S)-NADPHX. Gln67 and Asp129 together coordinate K(+). Residues 133-139 (GFSFHSE) and Asp162 contribute to the (6S)-NADPHX site. Ser165 is a K(+) binding site.

The protein belongs to the NnrE/AIBP family. The cofactor is K(+).

The protein localises to the cytoplasm. It is found in the mitochondrion. The enzyme catalyses (6R)-NADHX = (6S)-NADHX. The catalysed reaction is (6R)-NADPHX = (6S)-NADPHX. Catalyzes the epimerization of the S- and R-forms of NAD(P)HX, a damaged form of NAD(P)H that is a result of enzymatic or heat-dependent hydration. This is a prerequisite for the S-specific NAD(P)H-hydrate dehydratase to allow the repair of both epimers of NAD(P)HX. This Puccinia graminis f. sp. tritici (strain CRL 75-36-700-3 / race SCCL) (Black stem rust fungus) protein is NAD(P)H-hydrate epimerase.